We begin with the raw amino-acid sequence, 423 residues long: Glucose-1-phosphate adenylyltransferase (423 aa).

Residues tyrosine 108, glycine 173, glutamate 188–lysine 189, and serine 207 each bind alpha-D-glucose 1-phosphate.

The protein belongs to the bacterial/plant glucose-1-phosphate adenylyltransferase family. In terms of assembly, homotetramer.

It catalyses the reaction alpha-D-glucose 1-phosphate + ATP + H(+) = ADP-alpha-D-glucose + diphosphate. It participates in glycan biosynthesis; glycogen biosynthesis. Involved in the biosynthesis of ADP-glucose, a building block required for the elongation reactions to produce glycogen. Catalyzes the reaction between ATP and alpha-D-glucose 1-phosphate (G1P) to produce pyrophosphate and ADP-Glc. The chain is Glucose-1-phosphate adenylyltransferase from Francisella tularensis subsp. mediasiatica (strain FSC147).